We begin with the raw amino-acid sequence, 492 residues long: Glutamyl-tRNA(Gln) amidotransferase subunit A (492 aa).

Active-site charge relay system residues include K79 and S154. The active-site Acyl-ester intermediate is the S178.

Belongs to the amidase family. GatA subfamily. In terms of assembly, heterotrimer of A, B and C subunits.

It catalyses the reaction L-glutamyl-tRNA(Gln) + L-glutamine + ATP + H2O = L-glutaminyl-tRNA(Gln) + L-glutamate + ADP + phosphate + H(+). Allows the formation of correctly charged Gln-tRNA(Gln) through the transamidation of misacylated Glu-tRNA(Gln) in organisms which lack glutaminyl-tRNA synthetase. The reaction takes place in the presence of glutamine and ATP through an activated gamma-phospho-Glu-tRNA(Gln). The polypeptide is Glutamyl-tRNA(Gln) amidotransferase subunit A (Acinetobacter baumannii (strain ATCC 17978 / DSM 105126 / CIP 53.77 / LMG 1025 / NCDC KC755 / 5377)).